Reading from the N-terminus, the 977-residue chain is Ephrin type-A receptor 2 (977 aa).

Residues 1–25 form the signal peptide; that stretch reads MELRAVGFCLALLWGCALAAAAAQG. The segment at 1 to 205 is mediates interaction with CLDN4; it reads MELRAVGFCL…YYKKCPEMLQ (205 aa). Residues 26 to 538 lie on the Extracellular side of the membrane; it reads KEVVLLDFAA…STEGSANMAV (513 aa). The 179-residue stretch at 27-205 folds into the Eph LBD domain; it reads EVVLLDFAAM…YYKKCPEMLQ (179 aa). Cystine bridges form between Cys69-Cys187 and Cys104-Cys114. Residues 329-433 enclose the Fibronectin type-III 1 domain; the sequence is PPSAPNYLTA…TSRSFRTASV (105 aa). N-linked (GlcNAc...) asparagine glycosylation is found at Asn408 and Asn436. The Fibronectin type-III 2 domain occupies 439-530; the sequence is EPPKVRLEDR…KVHEFQTLST (92 aa). A helical transmembrane segment spans residues 539-559; sequence IGGVAVGVVLLLVLAGVGLFI. The Cytoplasmic segment spans residues 560–977; it reads HRRRRNLRAR…DQVNTVGIPI (418 aa). Residues Ser571 and Ser580 each carry the phosphoserine modification. Residues Tyr589 and Tyr595 each carry the phosphotyrosine; by autocatalysis modification. The interval 607 to 907 is mediates interaction with ARHGEF16; the sequence is TEIHPSCVAR…STSGSEGVPF (301 aa). Residues 614 to 876 enclose the Protein kinase domain; that stretch reads VARQKVIGAG…DIVSILDKLI (263 aa). 620–628 provides a ligand contact to ATP; it reads IGAGEFGEV. Position 629 is a phosphotyrosine (Tyr629). Residue Lys647 coordinates ATP. At Thr648 the chain carries Phosphothreonine. Tyr736 bears the Phosphotyrosine; by autocatalysis mark. Asp740 serves as the catalytic Proton acceptor. Position 773 is a phosphotyrosine; by autocatalysis (Tyr773). 4 positions are modified to phosphoserine: Ser870, Ser893, Ser898, and Ser902. A negatively regulates interaction with ARHGEF16 region spans residues 887–977; it reads DFDPRVSIRL…DQVNTVGIPI (91 aa). In terms of domain architecture, SAM spans 905 to 969; that stretch reads VPFRTVSEWL…AYSLLGLKDQ (65 aa). Tyr922 is modified (phosphotyrosine; by autocatalysis). A Phosphotyrosine modification is found at Tyr931. Positions 975–977 match the PDZ-binding motif; sequence IPI.

It belongs to the protein kinase superfamily. Tyr protein kinase family. Ephrin receptor subfamily. Homodimer. Interacts with INPPL1; regulates activated EPHA2 endocytosis and degradation. Interacts (inactivated form) with PTK2/FAK1 and interacts (EFNA1 ligand-activated form) with PTPN11; regulates integrin-mediated adhesion. Interacts with ARHGEF16, DOCK4 and ELMO2; mediates ligand-independent activation of RAC1 which stimulates cell migration. Interacts with CLDN4; phosphorylates CLDN4 and may regulate tight junctions. Interacts with ACP1. Interacts with CEMIP. Interacts with NCK1; may regulate EPHA2 activity in cell migration and adhesion. Interacts with SLA. Interacts (phosphorylated form) with VAV2, VAV3 and PI3-kinase p85 subunit (PIK3R1, PIK3R2 or PIK3R3); critical for the EFNA1-induced activation of RAC1 which stimulates cell migration. Interacts with ANKS1A. Interacts with TIMD4. Autophosphorylates. Phosphorylated at Ser-898 by PKB; serum-induced phosphorylation which targets EPHA2 to the cell leading edge and stimulates cell migration. Phosphorylation by PKB is inhibited by EFNA1-activated EPHA2 which regulates PKB activity via a reciprocal regulatory loop. Phosphorylated on tyrosine upon binding and activation by EFNA1. Phosphorylated residues Tyr-589 and Tyr-595 are required for binding VAV2 and VAV3 while phosphorylated residues Tyr-736 and Tyr-931 are required for binding PI3-kinase p85 subunit (PIK3R1, PIK3R2 or PIK3R3). These phosphorylated residues are critical for recruitment of VAV2 and VAV3 and PI3-kinase p85 subunit which transduce downstream signaling to activate RAC1 GTPase and cell migration. Dephosphorylation of Tyr-931 by PTPRF prevents the interaction of EPHA2 with NCK1. Phosphorylated at Ser-898 in response to TNF by RPS6KA1 and RPS6KA3; RPS6KA-EPHA2 signaling pathway controls cell migration. Phosphorylated at Ser-898 by PKA; blocks cell retraction induced by EPHA2 kinase activity. Dephosphorylated by ACP1. In terms of processing, ubiquitinated by CHIP/STUB1. Ubiquitination is regulated by the HSP90 chaperone and regulates the receptor stability and activity through proteasomal degradation. ANKS1A prevents ubiquitination and degradation. As to expression, expressed in the lung, intestine and liver. Expressed in myogenic progenitor cells.

The protein resides in the cell membrane. The protein localises to the cell projection. Its subcellular location is the ruffle membrane. It localises to the lamellipodium membrane. It is found in the cell junction. The protein resides in the focal adhesion. The catalysed reaction is L-tyrosyl-[protein] + ATP = O-phospho-L-tyrosyl-[protein] + ADP + H(+). Receptor tyrosine kinase which binds promiscuously membrane-bound ephrin-A family ligands residing on adjacent cells, leading to contact-dependent bidirectional signaling into neighboring cells. The signaling pathway downstream of the receptor is referred to as forward signaling while the signaling pathway downstream of the ephrin ligand is referred to as reverse signaling. Activated by the ligand ephrin-A1/EFNA1 regulates migration, integrin-mediated adhesion, proliferation and differentiation of cells. Regulates cell adhesion and differentiation through DSG1/desmoglein-1 and inhibition of the ERK1/ERK2 signaling pathway. May also participate in UV radiation-induced apoptosis and have a ligand-independent stimulatory effect on chemotactic cell migration. During development, may function in distinctive aspects of pattern formation and subsequently in development of several fetal tissues. Involved for instance in angiogenesis, in early hindbrain development and epithelial proliferation and branching morphogenesis during mammary gland development. Engaged by the ligand ephrin-A5/EFNA5 may regulate lens fiber cells shape and interactions and be important for lens transparency development and maintenance. With ephrin-A2/EFNA2 may play a role in bone remodeling through regulation of osteoclastogenesis and osteoblastogenesis. The polypeptide is Ephrin type-A receptor 2 (Epha2) (Mus musculus (Mouse)).